The sequence spans 323 residues: Aldo-keto reductase family 1 member C21 (323 aa).

20 to 24 lines the NADP(+) pocket; that stretch reads GFGTA. Position 31 (K31) interacts with substrate. An NADP(+)-binding site is contributed by D50. The active-site Proton donor is the Y55. A substrate-binding site is contributed by H117. NADP(+) contacts are provided by residues 166–167, Q190, 216–224, and 270–280; these read SN, YGVLGTQRY, and TSLKEERIKEN.

Belongs to the aldo/keto reductase family. In terms of assembly, monomer. As to expression, detected in kidney and brain.

The protein localises to the cytoplasm. It catalyses the reaction androsterone + NADP(+) = 5alpha-androstan-3,17-dione + NADPH + H(+). It carries out the reaction androsterone + NAD(+) = 5alpha-androstan-3,17-dione + NADH + H(+). Inhibited by high concentrations of substrate. Functionally, NADP-dependent 17-alpha-hydroxysteroid dehydrogenase that converts 5-alpha-androstane-3,17-dione into androsterone. Has lower 3-alpha-hydroxysteroid dehydrogenase activity. Has broad substrate specificity and acts on various 17-alpha-hydroxysteroids, 17-ketosteroids, 3-alpha hydroxysteroids and 3-ketosteroids. Reduction of keto groups is strictly stereoselective. Reduction of 17-ketosteroids yields only 17-alpha-hydroxysteroids. Likewise, reduction of 3-ketosteroids yields only 3-alpha-hydroxysteroids. This is Aldo-keto reductase family 1 member C21 (Akr1c21) from Mus musculus (Mouse).